A 704-amino-acid chain; its full sequence is Neutral ceramidase (704 aa).

The first 23 residues, 1–23, serve as a signal peptide directing secretion; that stretch reads MAISKIAFLALIALSGLCGLASA. Asn230 is a glycosylation site (N-linked (GlcNAc...) asparagine). Ser276 serves as the catalytic Nucleophile. Asn362, Asn550, and Asn598 each carry an N-linked (GlcNAc...) asparagine glycan.

It belongs to the neutral ceramidase family. N-glycosylated.

It is found in the secreted. It carries out the reaction an N-acylsphing-4-enine + H2O = sphing-4-enine + a fatty acid. In terms of biological role, hydrolyzes the sphingolipid ceramide into sphingosine and free fatty acid at an optimal pH of 6.5-7.5. Acts as a key regulator of sphingolipid signaling metabolites by generating sphingosine at the cell surface. This is Neutral ceramidase (CDase) from Drosophila pseudoobscura pseudoobscura (Fruit fly).